Reading from the N-terminus, the 152-residue chain is Arginine repressor (152 aa).

It belongs to the ArgR family.

It localises to the cytoplasm. It participates in amino-acid biosynthesis; L-arginine biosynthesis [regulation]. Its function is as follows. Regulates arginine biosynthesis genes. This chain is Arginine repressor, found in Lactococcus lactis subsp. lactis (strain IL1403) (Streptococcus lactis).